A 278-amino-acid polypeptide reads, in one-letter code: Large ribosomal subunit protein uL2 (278 aa).

The interval 222-278 (GVVMNPIDHPHGGGEGRTSGGRHPVTPWGKPTKGKKTRSNKSTDKFILISRHKRKKK) is disordered.

The protein belongs to the universal ribosomal protein uL2 family. Part of the 50S ribosomal subunit. Forms a bridge to the 30S subunit in the 70S ribosome.

One of the primary rRNA binding proteins. Required for association of the 30S and 50S subunits to form the 70S ribosome, for tRNA binding and peptide bond formation. It has been suggested to have peptidyltransferase activity; this is somewhat controversial. Makes several contacts with the 16S rRNA in the 70S ribosome. In Rhodopseudomonas palustris (strain ATCC BAA-98 / CGA009), this protein is Large ribosomal subunit protein uL2.